Reading from the N-terminus, the 301-residue chain is Probable alpha-L-glutamate ligase (301 aa).

Residues 104–287 form the ATP-grasp domain; that stretch reads LQLLSRRGVG…IASQIIAFIE (184 aa). ATP contacts are provided by residues Lys141, 178–179, Asp187, and 211–213; these read EF and RSN. Mg(2+) is bound by residues Asp248, Glu260, and Asn262. Asp248, Glu260, and Asn262 together coordinate Mn(2+).

This sequence belongs to the RimK family. Mg(2+) serves as cofactor. The cofactor is Mn(2+).

The chain is Probable alpha-L-glutamate ligase from Hydrogenovibrio crunogenus (strain DSM 25203 / XCL-2) (Thiomicrospira crunogena).